A 628-amino-acid polypeptide reads, in one-letter code: Biosynthetic arginine decarboxylase (628 aa).

Lysine 101 carries the N6-(pyridoxal phosphate)lysine modification. A substrate-binding site is contributed by 281-291 (VDVGGGLGVDY).

The protein belongs to the Orn/Lys/Arg decarboxylase class-II family. SpeA subfamily. The cofactor is Mg(2+). Requires pyridoxal 5'-phosphate as cofactor.

It catalyses the reaction L-arginine + H(+) = agmatine + CO2. Its pathway is amine and polyamine biosynthesis; agmatine biosynthesis; agmatine from L-arginine: step 1/1. Its function is as follows. Catalyzes the biosynthesis of agmatine from arginine. The sequence is that of Biosynthetic arginine decarboxylase from Alkalilimnicola ehrlichii (strain ATCC BAA-1101 / DSM 17681 / MLHE-1).